The following is a 668-amino-acid chain: Protein-glutamine gamma-glutamyltransferase (668 aa).

Over 1 to 6 the chain is Cytoplasmic; sequence MNAIPR. A helical transmembrane segment spans residues 7–27; it reads VALVWLLVAQVLVILPHLAYM. Over 28–50 the chain is Periplasmic; that stretch reads PLWIAAMWLGCAAWRVQVFRMRA. Residues 51–71 traverse the membrane as a helical segment; the sequence is GYPRAWVKLALALLAGAGVWL. At 72 to 74 the chain is on the cytoplasmic side; it reads SRG. Residues 75–95 form a helical membrane-spanning segment; sequence SLVGLDAGAVLLIAAFILKLV. Residues 96 to 103 are Periplasmic-facing; it reads EMKTRRDA. Transmembrane regions (helical) follow at residues 104 to 124 and 125 to 145; these read LVLV…DDGF and LAAL…IGLQ. The Cytoplasmic segment spans residues 146–158; that stretch reads QSAFASRPWPTLR. Residues 159-179 form a helical membrane-spanning segment; sequence LAGGLLLQALPLMLLLFLFFP. Residues 180–548 are Periplasmic-facing; that stretch reads RLGPLWSLPM…FGGLDPTRLG (369 aa). Cys-404 functions as the Nucleophile in the catalytic mechanism. Active-site residues include His-448 and Asp-464. The chain crosses the membrane as a helical span at residues 549-569; sequence LLLGAAAILSVGLLALFLLKP. Topologically, residues 570–668 are cytoplasmic; that stretch reads WQGRGDLRSR…TRDGRGEEQA (99 aa).

It belongs to the transglutaminase-like superfamily.

The protein resides in the cell inner membrane. The enzyme catalyses L-glutaminyl-[protein] + L-lysyl-[protein] = [protein]-L-lysyl-N(6)-5-L-glutamyl-[protein] + NH4(+). Functionally, displays transglutaminase activity (TGase) in vitro. Plays a critical role in the viability of P.aeruginosa. Might contribute to an essential function linked to the cell wall. The chain is Protein-glutamine gamma-glutamyltransferase (tgpA) from Pseudomonas aeruginosa (strain ATCC 15692 / DSM 22644 / CIP 104116 / JCM 14847 / LMG 12228 / 1C / PRS 101 / PAO1).